Here is a 149-residue protein sequence, read N- to C-terminus: Prefoldin subunit alpha (149 aa).

The protein belongs to the prefoldin alpha subunit family. As to quaternary structure, heterohexamer of two alpha and four beta subunits.

It localises to the cytoplasm. Molecular chaperone capable of stabilizing a range of proteins. Seems to fulfill an ATP-independent, HSP70-like function in archaeal de novo protein folding. The sequence is that of Prefoldin subunit alpha from Methanoculleus marisnigri (strain ATCC 35101 / DSM 1498 / JR1).